Here is a 732-residue protein sequence, read N- to C-terminus: 1,4-alpha-glucan branching enzyme GlgB 1 (732 aa).

The active-site Nucleophile is D411. The active-site Proton donor is the E464.

This sequence belongs to the glycosyl hydrolase 13 family. GlgB subfamily. In terms of assembly, monomer.

It catalyses the reaction Transfers a segment of a (1-&gt;4)-alpha-D-glucan chain to a primary hydroxy group in a similar glucan chain.. Its pathway is glycan biosynthesis; glycogen biosynthesis. Its function is as follows. Catalyzes the formation of the alpha-1,6-glucosidic linkages in glycogen by scission of a 1,4-alpha-linked oligosaccharide from growing alpha-1,4-glucan chains and the subsequent attachment of the oligosaccharide to the alpha-1,6 position. This is 1,4-alpha-glucan branching enzyme GlgB 1 from Xanthomonas oryzae pv. oryzae (strain KACC10331 / KXO85).